A 342-amino-acid chain; its full sequence is Phosphate acyltransferase (342 aa).

This sequence belongs to the PlsX family. In terms of assembly, homodimer. Probably interacts with PlsY.

The protein localises to the cytoplasm. It carries out the reaction a fatty acyl-[ACP] + phosphate = an acyl phosphate + holo-[ACP]. It functions in the pathway lipid metabolism; phospholipid metabolism. Functionally, catalyzes the reversible formation of acyl-phosphate (acyl-PO(4)) from acyl-[acyl-carrier-protein] (acyl-ACP). This enzyme utilizes acyl-ACP as fatty acyl donor, but not acyl-CoA. In Shewanella amazonensis (strain ATCC BAA-1098 / SB2B), this protein is Phosphate acyltransferase.